The chain runs to 412 residues: 1-deoxy-D-xylulose 5-phosphate reductoisomerase (412 aa).

Positions 5, 6, 7, 8, 31, 32, 33, and 125 each coordinate NADPH. K126 is a 1-deoxy-D-xylulose 5-phosphate binding site. E127 is a binding site for NADPH. D151 contributes to the Mn(2+) binding site. Positions 152, 153, 189, and 212 each coordinate 1-deoxy-D-xylulose 5-phosphate. E153 serves as a coordination point for Mn(2+). NADPH is bound at residue G218. 1-deoxy-D-xylulose 5-phosphate is bound by residues S225, N230, K231, and E234. E234 lines the Mn(2+) pocket.

The protein belongs to the DXR family. The cofactor is Mg(2+). Mn(2+) is required as a cofactor.

The enzyme catalyses 2-C-methyl-D-erythritol 4-phosphate + NADP(+) = 1-deoxy-D-xylulose 5-phosphate + NADPH + H(+). Its pathway is isoprenoid biosynthesis; isopentenyl diphosphate biosynthesis via DXP pathway; isopentenyl diphosphate from 1-deoxy-D-xylulose 5-phosphate: step 1/6. Its function is as follows. Catalyzes the NADPH-dependent rearrangement and reduction of 1-deoxy-D-xylulose-5-phosphate (DXP) to 2-C-methyl-D-erythritol 4-phosphate (MEP). The polypeptide is 1-deoxy-D-xylulose 5-phosphate reductoisomerase (Prochlorococcus marinus (strain SARG / CCMP1375 / SS120)).